The following is an 882-amino-acid chain: Valine--tRNA ligase (882 aa).

The short motif at 42–52 is the 'HIGH' region element; sequence PNVTGKLHLGH. The 'KMSKS' region signature appears at 522-526; that stretch reads KMSKS. Lys-525 serves as a coordination point for ATP. Positions 849–873 form a coiled coil; the sequence is KIEIEKKKYESYCKQYKKLLESKNN.

The protein belongs to the class-I aminoacyl-tRNA synthetase family. ValS type 1 subfamily. As to quaternary structure, monomer.

The protein localises to the cytoplasm. It carries out the reaction tRNA(Val) + L-valine + ATP = L-valyl-tRNA(Val) + AMP + diphosphate. Its function is as follows. Catalyzes the attachment of valine to tRNA(Val). As ValRS can inadvertently accommodate and process structurally similar amino acids such as threonine, to avoid such errors, it has a 'posttransfer' editing activity that hydrolyzes mischarged Thr-tRNA(Val) in a tRNA-dependent manner. This Onion yellows phytoplasma (strain OY-M) protein is Valine--tRNA ligase.